A 245-amino-acid chain; its full sequence is 3-deoxy-manno-octulosonate cytidylyltransferase (245 aa).

Belongs to the KdsB family.

The protein resides in the cytoplasm. It carries out the reaction 3-deoxy-alpha-D-manno-oct-2-ulosonate + CTP = CMP-3-deoxy-beta-D-manno-octulosonate + diphosphate. It functions in the pathway nucleotide-sugar biosynthesis; CMP-3-deoxy-D-manno-octulosonate biosynthesis; CMP-3-deoxy-D-manno-octulosonate from 3-deoxy-D-manno-octulosonate and CTP: step 1/1. Its pathway is bacterial outer membrane biogenesis; lipopolysaccharide biosynthesis. Activates KDO (a required 8-carbon sugar) for incorporation into bacterial lipopolysaccharide in Gram-negative bacteria. The polypeptide is 3-deoxy-manno-octulosonate cytidylyltransferase (Elusimicrobium minutum (strain Pei191)).